Here is a 188-residue protein sequence, read N- to C-terminus: Large ribosomal subunit protein eL18 (188 aa).

Lysine 119 participates in a covalent cross-link: Glycyl lysine isopeptide (Lys-Gly) (interchain with G-Cter in SUMO2). Position 130 is a phosphoserine (serine 130). Positions 150 to 188 (RHFGKAPRTPHSHTKPYVRSKGRKFERARGRWASRGYKN) are disordered. Basic residues-rich tracts occupy residues 151 to 171 (HFGKAPRTPHSHTKPYVRSKG) and 179 to 188 (GRWASRGYKN). Phosphothreonine is present on threonine 158. A Glycyl lysine isopeptide (Lys-Gly) (interchain with G-Cter in SUMO2) cross-link involves residue lysine 164.

It belongs to the eukaryotic ribosomal protein eL18 family. In terms of assembly, component of the large ribosomal subunit.

It is found in the cytoplasm. The protein resides in the cytosol. It localises to the rough endoplasmic reticulum. Functionally, component of the large ribosomal subunit. The ribosome is a large ribonucleoprotein complex responsible for the synthesis of proteins in the cell. The polypeptide is Large ribosomal subunit protein eL18 (RPL18) (Oryctolagus cuniculus (Rabbit)).